The following is a 344-amino-acid chain: Heat-inducible transcription repressor HrcA (344 aa).

Belongs to the HrcA family.

Negative regulator of class I heat shock genes (grpE-dnaK-dnaJ and groELS operons). Prevents heat-shock induction of these operons. This is Heat-inducible transcription repressor HrcA from Geobacillus kaustophilus (strain HTA426).